The primary structure comprises 477 residues: 3-sulfolactaldehyde dehydrogenase (477 aa).

232-233 (GS) contributes to the NAD(+) binding site. The active-site Proton acceptor is glutamate 252. Leucine 253 is an NAD(+) binding site. The Nucleophile role is filled by cysteine 286. Position 380 (glutamate 380) interacts with NAD(+).

The protein belongs to the aldehyde dehydrogenase family.

It catalyses the reaction (2S)-3-sulfolactaldehyde + NAD(+) + H2O = (2S)-3-sulfolactate + NADH + 2 H(+). Part of the sulfo-TAL (or sulfo-SFT) pathway, a D-sulfoquinovose degradation pathway that produces sulfolactate (SL). Catalyzes the oxidation of 3-sulfolactaldehyde (SLA) to sulfolactate (SL). The chain is 3-sulfolactaldehyde dehydrogenase from Priestia aryabhattai (Bacillus aryabhattai).